The chain runs to 264 residues: Thiazole synthase (264 aa).

Lys106 acts as the Schiff-base intermediate with DXP in catalysis. Residues Gly167, 193-194 (AG), and 215-216 (NS) contribute to the 1-deoxy-D-xylulose 5-phosphate site.

The protein belongs to the ThiG family. In terms of assembly, homotetramer. Forms heterodimers with either ThiH or ThiS.

The protein localises to the cytoplasm. It carries out the reaction [ThiS sulfur-carrier protein]-C-terminal-Gly-aminoethanethioate + 2-iminoacetate + 1-deoxy-D-xylulose 5-phosphate = [ThiS sulfur-carrier protein]-C-terminal Gly-Gly + 2-[(2R,5Z)-2-carboxy-4-methylthiazol-5(2H)-ylidene]ethyl phosphate + 2 H2O + H(+). It participates in cofactor biosynthesis; thiamine diphosphate biosynthesis. Functionally, catalyzes the rearrangement of 1-deoxy-D-xylulose 5-phosphate (DXP) to produce the thiazole phosphate moiety of thiamine. Sulfur is provided by the thiocarboxylate moiety of the carrier protein ThiS. In vitro, sulfur can be provided by H(2)S. In Pseudomonas fluorescens (strain SBW25), this protein is Thiazole synthase.